A 465-amino-acid polypeptide reads, in one-letter code: Apolipoprotein N-acyltransferase (465 aa).

The next 6 membrane-spanning stretches (helical) occupy residues 12–32 (AVLGGLLAGLAPGVAGPLSML), 49–69 (ALWGLFGVLLSHRWLLGLHPL), 80–100 (LPVAVAIWLSCGVAAALLLLL), 122–142 (LLALVWGAAELLLEGSPLFWI), 161–181 (WLGSGGLATLQLLWGWGLWQL), and 189–209 (CAWWLISLLLAHAMGALSLSP). The CN hydrolase domain maps to 221–448 (WQPAIPTREK…DAVAAAELQR (228 aa)). E262 (proton acceptor) is an active-site residue. Residue K312 is part of the active site. Residue C360 is the Nucleophile of the active site.

This sequence belongs to the CN hydrolase family. Apolipoprotein N-acyltransferase subfamily.

Its subcellular location is the cell inner membrane. The catalysed reaction is N-terminal S-1,2-diacyl-sn-glyceryl-L-cysteinyl-[lipoprotein] + a glycerophospholipid = N-acyl-S-1,2-diacyl-sn-glyceryl-L-cysteinyl-[lipoprotein] + a 2-acyl-sn-glycero-3-phospholipid + H(+). It functions in the pathway protein modification; lipoprotein biosynthesis (N-acyl transfer). Functionally, catalyzes the phospholipid dependent N-acylation of the N-terminal cysteine of apolipoprotein, the last step in lipoprotein maturation. This Parasynechococcus marenigrum (strain WH8102) protein is Apolipoprotein N-acyltransferase.